Consider the following 139-residue polypeptide: Single-stranded DNA-binding protein 2 (139 aa).

The SSB domain occupies 1 to 104; it reads MLNRTVLVGR…VVADSVQFLE (104 aa). Residues 103 to 139 are disordered; that stretch reads LEPKNNNKQNNQQHNGQTQTGNNPFDNTEEDFSDLPF. Over residues 106–125 the composition is skewed to low complexity; sequence KNNNKQNNQQHNGQTQTGNN. The span at 129 to 139 shows a compositional bias: acidic residues; the sequence is NTEEDFSDLPF.

As to quaternary structure, homotetramer.

The protein is Single-stranded DNA-binding protein 2 (ssb-p) of Staphylococcus aureus (strain COL).